Consider the following 63-residue polypeptide: DNA gyrase inhibitor YacG (63 aa).

Zn(2+)-binding residues include cysteine 10, cysteine 13, cysteine 29, and cysteine 33.

It belongs to the DNA gyrase inhibitor YacG family. Interacts with GyrB. It depends on Zn(2+) as a cofactor.

Functionally, inhibits all the catalytic activities of DNA gyrase by preventing its interaction with DNA. Acts by binding directly to the C-terminal domain of GyrB, which probably disrupts DNA binding by the gyrase. This chain is DNA gyrase inhibitor YacG, found in Chromobacterium violaceum (strain ATCC 12472 / DSM 30191 / JCM 1249 / CCUG 213 / NBRC 12614 / NCIMB 9131 / NCTC 9757 / MK).